A 298-amino-acid chain; its full sequence is Aclacinomycin methylesterase RdmC (298 aa).

The AB hydrolase-1 domain occupies 24-277 (PALLLVMGGN…LAEIPGMGHA (254 aa)). Catalysis depends on residues S102, D248, and H276.

The protein belongs to the AB hydrolase superfamily. Hydrolase RdmC family. As to quaternary structure, monomer.

It catalyses the reaction aclacinomycin T + H2O = 15-demethylaclacinomycin T + methanol. It functions in the pathway antibiotic biosynthesis; aclacinomycin biosynthesis. Its function is as follows. Involved in the biosynthesis of the anthracycline aclacinomycin which is an aromatic polyketide antibiotic that exhibits high cytotoxicity and is widely applied in the chemotherapy of a variety of cancers. Catalyzes the removal of the methoxy group from the C-15 position of aclacinomycin T and A to yield 15-demethoxyaclacinomycin T and A, respectively. The sequence is that of Aclacinomycin methylesterase RdmC (rdmC) from Streptomyces purpurascens.